The sequence spans 320 residues: MGLAGPRKRTKISHDPNNTAWSRSTSGYGHKIMSAQGWTPGSFLGASNAAHADHFTAGSAGHIRVILKDDNLGLGAKLRAEDEPTGLDAFQGLLGRLNGKSDEELEKELKKRHDRQLANFVEKRWKTMQFVSGGLLVHEKIQALADVKSAGGEEVQTPQISHDELKSEKRPKKARKKEKRRARGDDTGLDLAEQSPKRKRKDRKENKEKKKSSDDSSYANQGTPSEDALVDKIQKKRKKRKQKDPEPSNTEVHDDSLPPDTRSVSQEEQESRYSAKNESIRKIREHRPMGRQFTRGRHIQQKKLALMDSKSISEIFMVKC.

Positions 1-11 (MGLAGPRKRTK) are enriched in basic residues. A disordered region spans residues 1–24 (MGLAGPRKRTKISHDPNNTAWSRS). A compositionally biased stretch (polar residues) spans 15–24 (DPNNTAWSRS). One can recognise a G-patch domain in the interval 25 to 79 (TSGYGHKIMSAQGWTPGSFLGASNAAHADHFTAGSAGHIRVILKDDNLGLGAKLR). Residues 152 to 298 (GEEVQTPQIS…MGRQFTRGRH (147 aa)) are disordered. The segment covering 169–182 (KRPKKARKKEKRRA) has biased composition (basic residues). 3 stretches are compositionally biased toward basic and acidic residues: residues 203–214 (RKENKEKKKSSD), 243–256 (KDPE…HDDS), and 269–288 (QESR…EHRP).

Belongs to the PINX1 family.

The protein localises to the nucleus. It is found in the nucleolus. Functionally, involved in rRNA-processing at A0, A1 and A2 sites and negatively regulates telomerase. The sequence is that of Protein PXR1 (PXR1) from Ajellomyces capsulatus (strain NAm1 / WU24) (Darling's disease fungus).